An 86-amino-acid chain; its full sequence is Insulin (86 aa).

3 disulfide bridges follow: cysteine 7-cysteine 72, cysteine 19-cysteine 85, and cysteine 71-cysteine 76. A propeptide spans 33–63 (c peptide); it reads ELEDPQVGQADPGVVPEAGRLQPLALEMTLQ.

It belongs to the insulin family. In terms of assembly, heterodimer of a B chain and an A chain linked by two disulfide bonds.

Its subcellular location is the secreted. Its function is as follows. Insulin decreases blood glucose concentration. It increases cell permeability to monosaccharides, amino acids and fatty acids. It accelerates glycolysis, the pentose phosphate cycle, and glycogen synthesis in liver. This Chinchilla chinchilla (Short-tailed chinchilla) protein is Insulin (INS).